The following is a 73-amino-acid chain: Toxin Td10 (73 aa).

An N-terminal signal peptide occupies residues 1-7; it reads IGMVVEC. The 63-residue stretch at 8-70 folds into the LCN-type CS-alpha/beta domain; it reads KDGYLMGPDG…VWERATNRCG (63 aa). 4 disulfides stabilise this stretch: C18–C69, C22–C44, C30–C50, and C34–C52. K71 is modified (lysine amide).

It belongs to the long (4 C-C) scorpion toxin superfamily. Sodium channel inhibitor family. Beta subfamily. As to expression, expressed by the venom gland.

The protein resides in the secreted. Its function is as follows. Beta toxins bind voltage-independently at site-4 of sodium channels (Nav) and shift the voltage of activation toward more negative potentials thereby affecting sodium channel activation and promoting spontaneous and repetitive firing. In Tityus discrepans (Venezuelan scorpion), this protein is Toxin Td10.